The chain runs to 61 residues: Small ribosomal subunit protein uS14 (61 aa).

Residues C24, C27, C40, and C43 each coordinate Zn(2+).

Belongs to the universal ribosomal protein uS14 family. Zinc-binding uS14 subfamily. As to quaternary structure, part of the 30S ribosomal subunit. Contacts proteins S3 and S10. Zn(2+) serves as cofactor.

In terms of biological role, binds 16S rRNA, required for the assembly of 30S particles and may also be responsible for determining the conformation of the 16S rRNA at the A site. The chain is Small ribosomal subunit protein uS14 from Thermus aquaticus.